The primary structure comprises 220 residues: Adenylate kinase (220 aa).

10–15 serves as a coordination point for ATP; the sequence is GSGKST. The NMP stretch occupies residues 30–59; it reads SSGDIIRAEISSRTPLGLEMEKYLSRGDLI. AMP-binding positions include Ser-31, Arg-36, 57–59, 83–86, and Gln-90; these read DLI and GYPR. The tract at residues 124-161 is LID; that stretch reads GRRICSKCGAVYHIEFNPPKIPGKCDICGGDLIQRPDD. Arg-125 provides a ligand contact to ATP. Positions 128 and 131 each coordinate Zn(2+). 134–135 lines the ATP pocket; that stretch reads VY. The Zn(2+) site is built by Cys-148 and Cys-151. AMP-binding residues include Arg-158 and Arg-169. An ATP-binding site is contributed by Gly-197.

This sequence belongs to the adenylate kinase family. Monomer.

It is found in the cytoplasm. It carries out the reaction AMP + ATP = 2 ADP. The protein operates within purine metabolism; AMP biosynthesis via salvage pathway; AMP from ADP: step 1/1. Its function is as follows. Catalyzes the reversible transfer of the terminal phosphate group between ATP and AMP. Plays an important role in cellular energy homeostasis and in adenine nucleotide metabolism. The protein is Adenylate kinase of Pyrococcus horikoshii (strain ATCC 700860 / DSM 12428 / JCM 9974 / NBRC 100139 / OT-3).